The sequence spans 377 residues: UDP-N,N'-diacetylbacillosamine 2-epimerase (hydrolyzing) (377 aa).

This sequence belongs to the UDP-N-acetylglucosamine 2-epimerase family.

It catalyses the reaction UDP-N,N'-diacetylbacillosamine + H2O = 2,4-diacetamido-2,4,6-trideoxy-alpha-D-mannopyranose + UDP + H(+). In terms of biological role, involved in biosynthesis of legionaminic acid (5,7-diamino-3,5,7,9-tetradeoxy-D-glycero-D-galacto-non-2-ulosonic acid)(Leg), a sialic acid-like derivative that is incorporated into virulence-associated cell surface glycoconjugates such as lipopolysaccharide (LPS) which could be a key determinant in the ability of L.pneumophila to inhibit the fusion of phagosomes with lysosomes. LPS contains a majority alpha2,4-linked homomer of legionaminic acid. Catalyzes the conversion of UDP-N,N'-diacetylbacillosamine (Bac2Ac4Ac) into 2,4-diacetamido-2,4,6-trideoxymannose and UDP. This chain is UDP-N,N'-diacetylbacillosamine 2-epimerase (hydrolyzing), found in Legionella pneumophila subsp. pneumophila (strain Philadelphia 1 / ATCC 33152 / DSM 7513).